A 1200-amino-acid chain; its full sequence is Nuclear pore complex protein Nup133 (1200 aa).

Residues 1–28 (MERNLQKQLYGISRESSPGARRYSMPAA) form a disordered region.

This sequence belongs to the nucleoporin Nup133 family. In terms of assembly, forms part of the Nup107-Nup160 subcomplex in the nuclear pore.

The protein resides in the nucleus. Its subcellular location is the nuclear pore complex. Probable component of the nuclear pore complex (NPC). Plays a role in NPC assembly and/or maintenance. This is Nuclear pore complex protein Nup133 from Drosophila melanogaster (Fruit fly).